The primary structure comprises 98 residues: Integration host factor subunit alpha (98 aa).

The segment at 51-71 (NFDLRDKNERPGRNPKTGEDI) is disordered. Basic and acidic residues predominate over residues 53–69 (DLRDKNERPGRNPKTGE).

It belongs to the bacterial histone-like protein family. Heterodimer of an alpha and a beta chain.

This protein is one of the two subunits of integration host factor, a specific DNA-binding protein that functions in genetic recombination as well as in transcriptional and translational control. The polypeptide is Integration host factor subunit alpha (Vibrio campbellii (strain ATCC BAA-1116)).